A 79-amino-acid chain; its full sequence is Acyl carrier protein (79 aa).

The 76-residue stretch at 2–77 (DNIEQRVKKI…LAIDFAKSKA (76 aa)) folds into the Carrier domain. Ser-37 is subject to O-(pantetheine 4'-phosphoryl)serine.

This sequence belongs to the acyl carrier protein (ACP) family. 4'-phosphopantetheine is transferred from CoA to a specific serine of apo-ACP by AcpS. This modification is essential for activity because fatty acids are bound in thioester linkage to the sulfhydryl of the prosthetic group.

Its subcellular location is the cytoplasm. It functions in the pathway lipid metabolism; fatty acid biosynthesis. In terms of biological role, carrier of the growing fatty acid chain in fatty acid biosynthesis. This chain is Acyl carrier protein, found in Polynucleobacter necessarius subsp. necessarius (strain STIR1).